The sequence spans 262 residues: 2-keto-4-pentenoate hydratase (262 aa).

The protein belongs to the hydratase/decarboxylase family. MhpD subfamily. A divalent metal cation serves as cofactor.

The enzyme catalyses (S)-4-hydroxy-2-oxopentanoate = (2Z)-2-hydroxypenta-2,4-dienoate + H2O. The protein operates within aromatic compound metabolism; 3-phenylpropanoate degradation. Its function is as follows. Catalyzes the conversion of 2-hydroxypentadienoic acid (enolic form of 2-oxopent-4-enoate) to 4-hydroxy-2-ketopentanoic acid. The polypeptide is 2-keto-4-pentenoate hydratase (Paraburkholderia phymatum (strain DSM 17167 / CIP 108236 / LMG 21445 / STM815) (Burkholderia phymatum)).